A 197-amino-acid chain; its full sequence is Nucleoside triphosphate pyrophosphatase (197 aa).

Aspartate 75 serves as the catalytic Proton acceptor.

It belongs to the Maf family. The cofactor is a divalent metal cation.

Its subcellular location is the cytoplasm. It catalyses the reaction a ribonucleoside 5'-triphosphate + H2O = a ribonucleoside 5'-phosphate + diphosphate + H(+). The enzyme catalyses a 2'-deoxyribonucleoside 5'-triphosphate + H2O = a 2'-deoxyribonucleoside 5'-phosphate + diphosphate + H(+). Its function is as follows. Nucleoside triphosphate pyrophosphatase. May have a dual role in cell division arrest and in preventing the incorporation of modified nucleotides into cellular nucleic acids. This chain is Nucleoside triphosphate pyrophosphatase, found in Haemophilus ducreyi (strain 35000HP / ATCC 700724).